Consider the following 763-residue polypeptide: Phospholipid phosphatase-related protein type 4 (763 aa).

A disordered region spans residues 33–54 (VHTSPGGGRRPGQAAGMSAKER). Ser-36 bears the Phosphoserine mark. A run of 3 helical transmembrane segments spans residues 67 to 87 (LPCF…SLYF), 119 to 139 (AIPF…TIMV), and 178 to 198 (FVGV…IIQL). N-linked (GlcNAc...) asparagine glycans are attached at residues Asn-214 and Asn-219. Residues 247–267 (SFPSQHATLAAFAAVYVSMYF) form a helical membrane-spanning segment. Residue Asn-268 is glycosylated (N-linked (GlcNAc...) asparagine). Transmembrane regions (helical) follow at residues 276-296 (KLLK…CGLT) and 308-328 (VYCG…YAVG). At Ser-346 the chain carries Phosphoserine. Asn-362 carries N-linked (GlcNAc...) asparagine glycosylation. A Phosphoserine modification is found at Ser-385. Asn-432 carries N-linked (GlcNAc...) asparagine glycosylation. Ser-438 is subject to Phosphoserine. Asn-455 carries N-linked (GlcNAc...) asparagine glycosylation. A disordered region spans residues 458–529 (RKLSLQVIEP…PRVSIQSRPG (72 aa)). Ser-461 and Ser-472 each carry phosphoserine. Asn-513, Asn-543, and Asn-568 each carry an N-linked (GlcNAc...) asparagine glycan. Position 606 is a phosphoserine (Ser-606). The span at 669–694 (DSESCESLKDSFGSGDRKRSNIDSNE) shows a compositional bias: basic and acidic residues. Disordered regions lie at residues 669–698 (DSES…HHHH) and 739–763 (ERSN…AYKD). Over residues 740–749 (RSNSPENTRN) the composition is skewed to polar residues.

The protein belongs to the PA-phosphatase related phosphoesterase family. Post-translationally, O-glycosylated. Probably at Ser-346. As to expression, expressed by glutamatergic neurons (at protein level).

The protein localises to the postsynaptic density membrane. Its function is as follows. Postsynaptic density membrane protein that indirectly regulates glutamatergic synaptic transmission through lysophosphatidic acid (LPA)-mediated signaling pathways. Binds lysophosphatidic acid (LPA) and mediates its internalization into cells. Could act as receptor or a transporter of this lipid at the post-synaptic membrane. Modulates lysophosphatidic acid (LPA) activity in neuron axonal outgrowth during development by attenuating phospholipid-induced axon collapse. The sequence is that of Phospholipid phosphatase-related protein type 4 from Homo sapiens (Human).